The primary structure comprises 205 residues: Protein TGAM_1450 (205 aa).

Residues Glu7–Arg201 enclose the AMMECR1 domain.

This Thermococcus gammatolerans (strain DSM 15229 / JCM 11827 / EJ3) protein is Protein TGAM_1450.